The sequence spans 408 residues: 26S proteasome regulatory subunit 6B homolog (408 aa).

Ala2 bears the N-acetylalanine mark. At Ser16 the chain carries Phosphoserine. Positions 28–75 (EDLYGRLKSLERQLEFTDIQEEYVKDEQKNLKRELLRAQEEVKRIQSV) form a coiled coil. Residue 196-203 (GPPGTGKT) participates in ATP binding.

It belongs to the AAA ATPase family. Component of the 19S regulatory particle (RP/PA700) base subcomplex of the 26S proteasome. The 26S proteasome is composed of a core protease (CP), known as the 20S proteasome, capped at one or both ends by the 19S regulatory particle (RP/PA700). The RP/PA700 complex is composed of at least 17 different subunits in two subcomplexes, the base and the lid, which form the portions proximal and distal to the 20S proteolytic core, respectively. As to expression, expressed in dark-grown etiolated seedlings, roots, leaves, stems and flowers.

The protein localises to the cytoplasm. The protein resides in the nucleus. The 26S proteasome is involved in the ATP-dependent degradation of ubiquitinated proteins. The regulatory (or ATPase) complex confers ATP dependency and substrate specificity to the 26S complex. The chain is 26S proteasome regulatory subunit 6B homolog (RPT3) from Arabidopsis thaliana (Mouse-ear cress).